Consider the following 1071-residue polypeptide: Ubiquitin carboxyl-terminal hydrolase 7 (1071 aa).

Positions 467 to 532 (KARLQQEQQQ…MPTTPEIPPP (66 aa)) are disordered. Positions 471 to 480 (QQEQQQQQQQ) are enriched in low complexity. Polar residues predominate over residues 481-495 (PDSQDSFSAKESSTK). Composition is skewed to pro residues over residues 497-507 (PEPPSWKPPDL) and 516-532 (PPPP…IPPP). Positions 609–1069 (TGLRNLGNTC…DVYVLFYERV (461 aa)) constitute a USP domain. The active-site Nucleophile is the Cys618. The interval 913-942 (RMLGGSGKRSSSSTPFSTGGNDSNNSSDYK) is disordered. Residues 920 to 932 (KRSSSSTPFSTGG) show a composition bias toward polar residues. His1014 functions as the Proton acceptor in the catalytic mechanism.

The protein belongs to the peptidase C19 family.

It is found in the cytoplasm. It carries out the reaction Thiol-dependent hydrolysis of ester, thioester, amide, peptide and isopeptide bonds formed by the C-terminal Gly of ubiquitin (a 76-residue protein attached to proteins as an intracellular targeting signal).. Functionally, involved in the sorting of ubiquitinated cargo proteins at the multivesicular body (MVB). In Saccharomyces cerevisiae (strain ATCC 204508 / S288c) (Baker's yeast), this protein is Ubiquitin carboxyl-terminal hydrolase 7 (UBP7).